We begin with the raw amino-acid sequence, 198 residues long: Myc target protein 1 homolog (198 aa).

A Bipartite nuclear localization signal motif is present at residues 52-72; that stretch reads RRRASASISPRMPKSSSRRPR. Disordered stretches follow at residues 58-83 and 172-198; these read SISP…LNRS and NNSL…FPDS. A compositionally biased stretch (polar residues) spans 172–181; that stretch reads NNSLRLGPST.

It belongs to the MYCT1 family.

It localises to the nucleus. May regulate certain MYC target genes, MYC seems to be a direct upstream transcriptional activator. In Xenopus tropicalis (Western clawed frog), this protein is Myc target protein 1 homolog (myct1).